A 173-amino-acid chain; its full sequence is Transcription factor E (173 aa).

The region spanning Pro6–Asn89 is the HTH TFE/IIEalpha-type domain.

This sequence belongs to the TFE family. As to quaternary structure, monomer. Interaction with RNA polymerase subunits RpoF and RpoE is necessary for Tfe stimulatory transcription activity. Able to interact with Tbp and RNA polymerase in the absence of DNA promoter. Interacts both with the preinitiation and elongation complexes.

Transcription factor that plays a role in the activation of archaeal genes transcribed by RNA polymerase. Facilitates transcription initiation by enhancing TATA-box recognition by TATA-box-binding protein (Tbp), and transcription factor B (Tfb) and RNA polymerase recruitment. Not absolutely required for transcription in vitro, but particularly important in cases where Tbp or Tfb function is not optimal. It dynamically alters the nucleic acid-binding properties of RNA polymerases by stabilizing the initiation complex and destabilizing elongation complexes. Seems to translocate with the RNA polymerase following initiation and acts by binding to the non template strand of the transcription bubble in elongation complexes. This is Transcription factor E from Ignicoccus hospitalis (strain KIN4/I / DSM 18386 / JCM 14125).